A 740-amino-acid chain; its full sequence is Homeobox protein 4 (740 aa).

The span at 1-13 (MNTVEENNTKITD) shows a compositional bias: polar residues. 2 disordered regions span residues 1–41 (MNTV…ENLS) and 179–491 (NNNN…NNEI). Composition is skewed to low complexity over residues 14–34 (NNNN…NNKN), 179–241 (NNNN…PQQN), 251–288 (NNNN…NNNN), and 303–316 (STTD…SVPS). Positions 254 to 287 (NINNNNINKNNNNYNNNNNNKNNNNNNNNNNNNN) form a coiled coil. Positions 317–328 (NKKKSSKTKQKS) are enriched in basic residues. Over residues 339-363 (HKSNYHQQPNQNSQHLQSKPNSPIL) the composition is skewed to polar residues. Low complexity-rich tracts occupy residues 365–390 (SSPL…SPPQ) and 397–491 (NNNF…NNEI). Residues 472–500 (NTNTNNNNNKNNNNNNNNEIENNNNEELI) adopt a coiled-coil conformation. A DNA-binding region (homeobox) is located at residues 605 to 667 (RPKKGAKLSK…NTRRRKVPTL (63 aa)). Over residues 686–722 (NNNNNNGGNSNFKNNNNNTITTTSTSNNNNNNNNNNH) the composition is skewed to low complexity. Residues 686-740 (NNNNNNGGNSNFKNNNNNTITTTSTSNNNNNNNNNNHNEMECDDGENEESSEYDD) are disordered. The segment covering 726–740 (ECDDGENEESSEYDD) has biased composition (acidic residues).

It is found in the nucleus. Putative transcription factor. This Dictyostelium discoideum (Social amoeba) protein is Homeobox protein 4 (hbx4).